Here is a 332-residue protein sequence, read N- to C-terminus: 6-phosphogluconolactonase (332 aa).

It belongs to the cycloisomerase 2 family.

The catalysed reaction is 6-phospho-D-glucono-1,5-lactone + H2O = 6-phospho-D-gluconate + H(+). The protein operates within carbohydrate degradation; pentose phosphate pathway; D-ribulose 5-phosphate from D-glucose 6-phosphate (oxidative stage): step 2/3. Functionally, catalyzes the hydrolysis of 6-phosphogluconolactone to 6-phosphogluconate. In Pectobacterium carotovorum subsp. carotovorum (strain PC1), this protein is 6-phosphogluconolactonase.